We begin with the raw amino-acid sequence, 221 residues long: Thiamine-phosphate synthase (221 aa).

4-amino-2-methyl-5-(diphosphooxymethyl)pyrimidine is bound by residues 44–48 (QFREK) and Asn-79. Mg(2+)-binding residues include Asp-80 and Asp-99. Residue Ser-117 participates in 4-amino-2-methyl-5-(diphosphooxymethyl)pyrimidine binding. Residue 143–145 (TRS) participates in 2-[(2R,5Z)-2-carboxy-4-methylthiazol-5(2H)-ylidene]ethyl phosphate binding. Lys-146 serves as a coordination point for 4-amino-2-methyl-5-(diphosphooxymethyl)pyrimidine. 2-[(2R,5Z)-2-carboxy-4-methylthiazol-5(2H)-ylidene]ethyl phosphate-binding positions include Gly-175 and 195–196 (IS).

This sequence belongs to the thiamine-phosphate synthase family. Requires Mg(2+) as cofactor.

The catalysed reaction is 2-[(2R,5Z)-2-carboxy-4-methylthiazol-5(2H)-ylidene]ethyl phosphate + 4-amino-2-methyl-5-(diphosphooxymethyl)pyrimidine + 2 H(+) = thiamine phosphate + CO2 + diphosphate. The enzyme catalyses 2-(2-carboxy-4-methylthiazol-5-yl)ethyl phosphate + 4-amino-2-methyl-5-(diphosphooxymethyl)pyrimidine + 2 H(+) = thiamine phosphate + CO2 + diphosphate. It catalyses the reaction 4-methyl-5-(2-phosphooxyethyl)-thiazole + 4-amino-2-methyl-5-(diphosphooxymethyl)pyrimidine + H(+) = thiamine phosphate + diphosphate. The protein operates within cofactor biosynthesis; thiamine diphosphate biosynthesis; thiamine phosphate from 4-amino-2-methyl-5-diphosphomethylpyrimidine and 4-methyl-5-(2-phosphoethyl)-thiazole: step 1/1. Condenses 4-methyl-5-(beta-hydroxyethyl)thiazole monophosphate (THZ-P) and 2-methyl-4-amino-5-hydroxymethyl pyrimidine pyrophosphate (HMP-PP) to form thiamine monophosphate (TMP). This is Thiamine-phosphate synthase from Geobacillus thermodenitrificans (strain NG80-2).